A 379-amino-acid polypeptide reads, in one-letter code: EP300-interacting inhibitor of differentiation 3 (379 aa).

Residues 32-58 (LKQVEEEEEVEALKVEVAAASDTESDT) adopt a coiled-coil conformation.

Belongs to the NSE4 family. As to quaternary structure, component of the SMC5-SMC6 complex which consists at least of SMC5, SMC6, NSMCE2, NSMCE1, NSMCE4A or EID3 and NSMCE3. NSMCE1, NSMCE4A or EID3 and NSMCE3 probably form a subcomplex that bridges the head domains of the SMC5:SMC6 heterodimer. Homodimer, and heterodimer with EID2. Interacts with the C-terminal region of CREBBP.

The protein localises to the nucleus. It localises to the cytoplasm. It is found in the chromosome. Its subcellular location is the telomere. Functionally, tissue-specific component of the SMC5-SMC6 complex, a complex involved in repair of DNA double-strand breaks by homologous recombination. The complex may promote sister chromatid homologous recombination by recruiting the SMC1-SMC3 cohesin complex to double-strand breaks. The complex is required for telomere maintenance via recombination and mediates sumoylation of shelterin complex (telosome) components. In terms of biological role, acts as a repressor of nuclear receptor-dependent transcription possibly by interfering with CREBBP-dependent coactivation. May function as a coinhibitor of other CREBBP/EP300-dependent transcription factors. This is EP300-interacting inhibitor of differentiation 3 from Bos taurus (Bovine).